Consider the following 152-residue polypeptide: Phospholipase A2 (152 aa).

Positions 1–20 are cleaved as a signal peptide; the sequence is MAACHRILLLLSVAVASGAA. 8 disulfide bridges follow: cysteine 39/cysteine 96, cysteine 53/cysteine 142, cysteine 55/cysteine 70, cysteine 69/cysteine 124, cysteine 75/cysteine 149, cysteine 76/cysteine 117, cysteine 85/cysteine 110, and cysteine 103/cysteine 115. Ca(2+)-binding residues include glycine 56 and glycine 58. Histidine 73 is a catalytic residue. Aspartate 74 serves as a coordination point for Ca(2+). Aspartate 118 is a catalytic residue.

This sequence belongs to the phospholipase A2 family. In terms of tissue distribution, expressed by the venom gland. Heavily expressed in the venom gland transcriptome.

The protein resides in the secreted. It catalyses the reaction a 1,2-diacyl-sn-glycero-3-phosphocholine + H2O = a 1-acyl-sn-glycero-3-phosphocholine + a fatty acid + H(+). In terms of biological role, PA2 catalyzes the calcium-dependent hydrolysis of the 2-acyl groups in 3-sn-phosphoglycerides. This chain is Phospholipase A2, found in Meiacanthus atrodorsalis (Forktail blenny).